The chain runs to 738 residues: MARASSSSGPLPPLANVPSSWAQPVGAGEERDEGRRGGLGLLAAVSVPCPDFSRQPWAPASASGPMPFALQRLRATLLRLHREREQLLRARDCARHLQAVVRLLRSGSSAGSLSLQQLHGDLQLCPSRGAALRLGFPGSRETLLLTRPVGLAAQHLEAAIEMQLRSLGRTPASLGLTSQLAELLLALPFYHTLQGHSLNFVPGAARPFPAARVLQLLAAERGCQVADKLAEARGGSGLQEQLRRQCEQERELLPGLLGLVGGVASTDSSGLRLGGPGALWSQYWTLLWAACAKCLDLRVGPWEDPRAMAQELSQALCQAPLPQECEKELLSLCHSLFHQSVICSWDQGFCQALGSALGGQSSPASLSPTSELLQRLFPPLLDSLRQPRPELRLCPPAGPTPVALGLCTLQTTLLWFVGRAQQHLAAWDPGSFLLLLQKDLPPLLSAVEALSSLASEAALTLEVEQQLGLEIHNLTEKMQLLPKESLGLFVQECHKQATQGFKLHMPRGRYWRLRLCPEPPSDPSEYARIVVYSVLEPVLQGLQGLPPEAQAPALGQALTATLGAWLDHILTHGIRFSLQGALQLKQDFGVVREVLEQEQWGLSQELRQTLLSLSIFQQLDGALLCLLQQPLPKNPVHRRPPRCCLCYEVQTTELPTSSLNSLENLAPPLRLGVSPAQNTHLLSTLGGGGRGGGGGGGPGPSPEAYLVGNQQAWLALRLHQHPRWHLPFFSCLRTSPEP.

The interval M1–G34 is disordered. The stretch at A69–D92 forms a coiled coil. The disordered stretch occupies residues L682–A704. Residues L685–P698 show a composition bias toward gly residues.

The protein is Coiled-coil domain-containing protein 142 (Ccdc142) of Mus musculus (Mouse).